The sequence spans 205 residues: Golgi apparatus membrane protein TVP23 homolog B (205 aa).

Methionine 1 carries the post-translational modification N-acetylmethionine. Positions 1-21 are disordered; that stretch reads MLQQDSNDDTEDVSLFDAEEE. Helical transmembrane passes span 34–53, 54–72, 126–146, and 152–172; these read PVASFFHLFFRVSAIIVYLL, CELLSSSFITCMVTIILLL, IFWLGLIACPVLWVIFAFSAL, and KWLAVVIMGVVLQGANLYGYI.

Belongs to the TVP23 family.

The protein localises to the membrane. The chain is Golgi apparatus membrane protein TVP23 homolog B (TVP23B) from Pongo abelii (Sumatran orangutan).